A 666-amino-acid chain; its full sequence is MDDFKKFELISDYKPAGDQQKAIDEMVNNINQGIQRQVLLGATGTGKTFSVANVIAKTQLKTLVLAHNKTLAAQLFAELKEMFPHNKVEYFVSYFDYYQPEAYKPITDTYIEKDSVTNAEIEMMRLSTINSLATRNDVIVVASVACIYASVSPIEFTKKNLYLHVGELIEFEQIKYKLVQLGYERKDYDLVPGTFRIRGDLIEIMSGYSDKFKIRISMFGNEVESIDLCDPITNNIISKEQRFILRSASEYIFDDSRLAIAIENIKNELDERVKFFLKNNQLIEAQRIEQRTKQDLESIVEFGFCSGVENYYRHLEHREPFQTPWTIFDFFSYNNQDWLLIVDESHISLPQVKGMHNTDRSRKQTLVEYGFRLPSALDNRPLNYDEFNKKLSKTIYVSATPNDEEIALSDNHIVSQIVRPTGLLDPIIEIRKTEHQIDDLINELMLLKNKNQRAFITVMTIRMAEDLTNYLNNTKIKAAYLHNELKTLERSVIINKLRKGIYDCVVGINLLREGLDVPEVAGVFIFDADKPGFFRSDKSLIQIIGRAARNADGKVIMYADVITQAMQTAINETKRRREIQLAFNLKHNIIPKTIIKPIHEDLSGHDYKQNAELYAAKASKNEYNQKIKELKKKMEEAAKKREYEVAAQYRDMIVELEAIKQSVKSK.

The Helicase ATP-binding domain maps to 28–171 (NNINQGIQRQ…YLHVGELIEF (144 aa)). 41 to 48 (GATGTGKT) serves as a coordination point for ATP. A Beta-hairpin motif is present at residues 94-117 (YFDYYQPEAYKPITDTYIEKDSVT). The 163-residue stretch at 436–598 (QIDDLINELM…IIPKTIIKPI (163 aa)) folds into the Helicase C-terminal domain. Residues 624–659 (NQKIKELKKKMEEAAKKREYEVAAQYRDMIVELEAI) form the UVR domain.

This sequence belongs to the UvrB family. As to quaternary structure, forms a heterotetramer with UvrA during the search for lesions. Interacts with UvrC in an incision complex.

The protein localises to the cytoplasm. In terms of biological role, the UvrABC repair system catalyzes the recognition and processing of DNA lesions. A damage recognition complex composed of 2 UvrA and 2 UvrB subunits scans DNA for abnormalities. Upon binding of the UvrA(2)B(2) complex to a putative damaged site, the DNA wraps around one UvrB monomer. DNA wrap is dependent on ATP binding by UvrB and probably causes local melting of the DNA helix, facilitating insertion of UvrB beta-hairpin between the DNA strands. Then UvrB probes one DNA strand for the presence of a lesion. If a lesion is found the UvrA subunits dissociate and the UvrB-DNA preincision complex is formed. This complex is subsequently bound by UvrC and the second UvrB is released. If no lesion is found, the DNA wraps around the other UvrB subunit that will check the other stand for damage. The polypeptide is UvrABC system protein B (Ureaplasma parvum serovar 3 (strain ATCC 27815 / 27 / NCTC 11736)).